Reading from the N-terminus, the 399-residue chain is Transferrin receptor subunit ESAG6 (399 aa).

Positions 1–17 (MRFWFVLLALLGKEIYA) are cleaved as a signal peptide. N26 and N110 each carry an N-linked (GlcNAc...) asparagine glycan. 3 cysteine pairs are disulfide-bonded: C34–C161, C84–C312, and C144–C215. N-linked (GlcNAc...) asparagine glycosylation is found at N235, N250, and N360. Residue N376 is the site of GPI-anchor amidated asparagine attachment. The propeptide at 377–399 (AAAIHLSVSTAALCRSALLLGVL) is removed in mature form.

Heterodimer composed of ESAG6 and ESAG7. In terms of processing, N-glycosylated. Glycosylation is dispensable for heterodimer formation and host transferrin binding.

The protein resides in the cell membrane. Its subcellular location is the flagellar pocket. Transferrin receptor subunit involved in receptor-mediated acquisition of iron from the environment by binding host TF/transferrin. This Trypanosoma brucei brucei protein is Transferrin receptor subunit ESAG6.